Reading from the N-terminus, the 142-residue chain is Regulatory protein RecX (142 aa).

The protein belongs to the RecX family.

It is found in the cytoplasm. Modulates RecA activity. In Thermus thermophilus (strain ATCC BAA-163 / DSM 7039 / HB27), this protein is Regulatory protein RecX.